The chain runs to 235 residues: Serine protease SplA (235 aa).

The first 35 residues, 1–35 (MNKNVMVKGLTALDILTSLGCAENISDQPHSIAKA), serve as a signal peptide directing secretion. Active-site charge relay system residues include H74, D113, and S189.

This sequence belongs to the peptidase S1B family.

Its subcellular location is the secreted. In Staphylococcus aureus, this protein is Serine protease SplA (splA).